The sequence spans 399 residues: uncharacterized protein (399 aa).

It belongs to the AdoMet synthetase 2 family.

This is an uncharacterized protein from Streptococcus pyogenes serotype M1.